The sequence spans 436 residues: MRQALPLVTRQGDRIAIVSGLRTPFARQATAFHGIPAVDLGKMVVGELLARSEIPADAIEQLVFGQVVQMPEAPNIAREIVLGTGMNVHTDAYSVSRACATSFQAVANVAESLMAGTIRAGIAGGADSSSVLPIGVSKALARVLVDVNKARTTRQRLTLFSRLRLRDLLPVPPAVAEYSTGLRMGDTAEQMAKTYGITREQQDALAHRSHQRAAQAWAEGKLAEEVMTTYVPPYKNPFAEDNNIRGASTLADYAKLRPAFDRKHGSVTAANSTPLTDGAAAVILMTESRAKELGLRPLGYLRSYAFTAIDVWQDMLLGPAWSTPLALERAGLTMADLTLFDMHEAFAAQTLANLQLLGSERFACEVLGRAQATGEVDDAKFNVLGGSIAYGHPFAATGARMITQTLHELRRRGGGFGLVTACAAGGLGAAMVLEAE.

The active-site Acyl-thioester intermediate is the Cys-99. Catalysis depends on proton acceptor residues His-392 and Cys-422.

This sequence belongs to the thiolase-like superfamily. Thiolase family. Heterotetramer of two alpha chains (FadJ) and two beta chains (FadI).

It localises to the cytoplasm. The enzyme catalyses an acyl-CoA + acetyl-CoA = a 3-oxoacyl-CoA + CoA. Its pathway is lipid metabolism; fatty acid beta-oxidation. Its function is as follows. Catalyzes the final step of fatty acid oxidation in which acetyl-CoA is released and the CoA ester of a fatty acid two carbons shorter is formed. In Salmonella heidelberg (strain SL476), this protein is 3-ketoacyl-CoA thiolase.